Here is a 248-residue protein sequence, read N- to C-terminus: Leucyl/phenylalanyl-tRNA--protein transferase (248 aa).

This sequence belongs to the L/F-transferase family.

The protein localises to the cytoplasm. The enzyme catalyses N-terminal L-lysyl-[protein] + L-leucyl-tRNA(Leu) = N-terminal L-leucyl-L-lysyl-[protein] + tRNA(Leu) + H(+). The catalysed reaction is N-terminal L-arginyl-[protein] + L-leucyl-tRNA(Leu) = N-terminal L-leucyl-L-arginyl-[protein] + tRNA(Leu) + H(+). It catalyses the reaction L-phenylalanyl-tRNA(Phe) + an N-terminal L-alpha-aminoacyl-[protein] = an N-terminal L-phenylalanyl-L-alpha-aminoacyl-[protein] + tRNA(Phe). Functionally, functions in the N-end rule pathway of protein degradation where it conjugates Leu, Phe and, less efficiently, Met from aminoacyl-tRNAs to the N-termini of proteins containing an N-terminal arginine or lysine. The protein is Leucyl/phenylalanyl-tRNA--protein transferase of Rhizorhabdus wittichii (strain DSM 6014 / CCUG 31198 / JCM 15750 / NBRC 105917 / EY 4224 / RW1) (Sphingomonas wittichii).